Consider the following 594-residue polypeptide: Apolipoprotein N-acyltransferase (594 aa).

The span at 1 to 29 (MIPAVTDDDPLEDPLDDDVAPGLDDAEPE) shows a compositional bias: acidic residues. The tract at residues 1-48 (MIPAVTDDDPLEDPLDDDVAPGLDDAEPEPEPRDEHDEPSRPATGSRI) is disordered. Residues 1–67 (MIPAVTDDDP…RFGKGVLDRC (67 aa)) lie on the Cytoplasmic side of the membrane. A compositionally biased stretch (basic and acidic residues) spans 30–40 (PEPRDEHDEPS). The helical transmembrane segment at 68-87 (APLSAAIGGGLALWLSFPPI) threads the bilayer. At 88-116 (GWWFTAFPGLALLGWVLTRTATTKAGGFG) the chain is on the extracellular side. A helical transmembrane segment spans residues 117–134 (YGVLFGLAFYVPLLPWIS). At 135–138 (GLVG) the chain is on the cytoplasmic side. A helical membrane pass occupies residues 139–160 (AVPWLALAFAESLFCGLFGLGA). Over 161 to 221 (VVVVRLPGWP…IGGAPLVSFA (61 aa)) the chain is Extracellular. A helical membrane pass occupies residues 222 to 239 (VALIGFSLTLLTAQIVWW). The Cytoplasmic segment spans residues 240-251 (WRHGHKPGVPAP). A helical transmembrane segment spans residues 252-269 (AVMLPGVAIAASLLVTAL). Residues 270–554 (VWPQVRQSGT…TDLTPATKWG (285 aa)) are Extracellular-facing. The region spanning 287-543 (VTVAAVQGNV…PAYLDNQIRL (257 aa)) is the CN hydrolase domain. The Proton acceptor role is filled by E340. Residue K405 is part of the active site. C455 (nucleophile) is an active-site residue. A helical transmembrane segment spans residues 555 to 572 (PIVQAVLVIAGVAVLLIA). Residues 573–594 (ILHNGRFAPRMLRRRSATTVKR) lie on the Cytoplasmic side of the membrane.

Belongs to the CN hydrolase family. Apolipoprotein N-acyltransferase subfamily. Interacts with Ppm1 (AC A0QZ12) upon coexpression in E.coli, which increases the PPM synthase activity of Ppm1.

The protein resides in the cell membrane. The enzyme catalyses N-terminal S-1,2-diacyl-sn-glyceryl-L-cysteinyl-[lipoprotein] + a glycerophospholipid = N-acyl-S-1,2-diacyl-sn-glyceryl-L-cysteinyl-[lipoprotein] + a 2-acyl-sn-glycero-3-phospholipid + H(+). It functions in the pathway protein modification; lipoprotein biosynthesis (N-acyl transfer). In terms of biological role, catalyzes the phospholipid dependent N-acylation of the N-terminal cysteine of apolipoprotein, the last step in lipoprotein maturation. Can transfer a number of fatty acids (C16 and C19, palmitic and probably tuberculostearic acids respectively are shown). Enhances the polyprenol monophosphomannose (PPM) synthase activity of Ppm1 (AC A0QZ12) without itself having PPM synthase catalytic activity. The sequence is that of Apolipoprotein N-acyltransferase from Mycolicibacterium smegmatis (strain ATCC 700084 / mc(2)155) (Mycobacterium smegmatis).